The chain runs to 210 residues: Thymidylate kinase (210 aa).

10–17 (GPEGAGKS) lines the ATP pocket.

The protein belongs to the thymidylate kinase family.

It carries out the reaction dTMP + ATP = dTDP + ADP. Phosphorylation of dTMP to form dTDP in both de novo and salvage pathways of dTTP synthesis. This is Thymidylate kinase from Pseudomonas fluorescens (strain SBW25).